The following is a 420-amino-acid chain: Protein STB1 (420 aa).

At Ser2 the chain carries N-acetylserine. The tract at residues 2-70 (SQPQMSPEKE…DEDHKTLLEA (69 aa)) is interaction with SWI6. Position 7 is a phosphoserine (Ser7). 2 disordered regions span residues 30–187 (QLKL…SDNT) and 273–319 (DSPS…ELNG). A compositionally biased stretch (basic and acidic residues) spans 43–55 (RKQDSTTKKRSGE). Ser72 bears the Phosphoserine mark. Thr99 carries the post-translational modification Phosphothreonine. Residue Ser102 is modified to Phosphoserine. The span at 106 to 122 (RKAEDRSQQIKPRKEDT) shows a compositional bias: basic and acidic residues. Positions 156–169 (NNNNSSNHSNNNNN) are enriched in low complexity. Residues 277-319 (LYLSNNNGSVQATLSPQQRRKPTTNTLHPPSNVPTTPSRELNG) show a composition bias toward polar residues. Thr419 is subject to Phosphothreonine.

As to quaternary structure, interacts with the ANK repeats of SWI6. The interaction with SWI6 is required for function. Interacts with SIN3. In terms of processing, phosphorylated by CDC28 in a cell cycle-dependent manner, inhibiting the interaction with SWI6.

It localises to the cytoplasm. The protein localises to the nucleus. Functionally, involved in the regulation and timing of MBF-dependent transcription in late G1 of the cell cycle. The chain is Protein STB1 (STB1) from Saccharomyces cerevisiae (strain ATCC 204508 / S288c) (Baker's yeast).